The primary structure comprises 190 residues: Potassium-transporting ATPase KdpC subunit (190 aa).

The helical transmembrane segment at 10–30 (VLLLVLTGLTGFAYPLLSTAI) threads the bilayer.

Belongs to the KdpC family. As to quaternary structure, the system is composed of three essential subunits: KdpA, KdpB and KdpC.

It is found in the cell inner membrane. Its function is as follows. Part of the high-affinity ATP-driven potassium transport (or Kdp) system, which catalyzes the hydrolysis of ATP coupled with the electrogenic transport of potassium into the cytoplasm. This subunit acts as a catalytic chaperone that increases the ATP-binding affinity of the ATP-hydrolyzing subunit KdpB by the formation of a transient KdpB/KdpC/ATP ternary complex. The sequence is that of Potassium-transporting ATPase KdpC subunit from Sorangium cellulosum (strain So ce56) (Polyangium cellulosum (strain So ce56)).